A 293-amino-acid chain; its full sequence is ATP phosphoribosyltransferase (293 aa).

The protein belongs to the ATP phosphoribosyltransferase family. Long subfamily. Mg(2+) serves as cofactor.

It localises to the cytoplasm. The catalysed reaction is 1-(5-phospho-beta-D-ribosyl)-ATP + diphosphate = 5-phospho-alpha-D-ribose 1-diphosphate + ATP. The protein operates within amino-acid biosynthesis; L-histidine biosynthesis; L-histidine from 5-phospho-alpha-D-ribose 1-diphosphate: step 1/9. With respect to regulation, feedback inhibited by histidine. Functionally, catalyzes the condensation of ATP and 5-phosphoribose 1-diphosphate to form N'-(5'-phosphoribosyl)-ATP (PR-ATP). Has a crucial role in the pathway because the rate of histidine biosynthesis seems to be controlled primarily by regulation of HisG enzymatic activity. The protein is ATP phosphoribosyltransferase of Nitratidesulfovibrio vulgaris (strain ATCC 29579 / DSM 644 / CCUG 34227 / NCIMB 8303 / VKM B-1760 / Hildenborough) (Desulfovibrio vulgaris).